The following is an 843-amino-acid chain: NADH-quinone oxidoreductase subunit G (843 aa).

The 2Fe-2S ferredoxin-type domain maps to aspartate 20–serine 98. 4 residues coordinate [2Fe-2S] cluster: cysteine 54, cysteine 65, cysteine 68, and cysteine 82. A 4Fe-4S His(Cys)3-ligated-type domain is found at valine 100–glycine 139. [4Fe-4S] cluster contacts are provided by histidine 116, cysteine 120, cysteine 123, cysteine 129, cysteine 169, cysteine 172, cysteine 175, cysteine 219, cysteine 245, cysteine 248, cysteine 252, and cysteine 280. In terms of domain architecture, 4Fe-4S Mo/W bis-MGD-type spans leucine 238–aspartate 294.

This sequence belongs to the complex I 75 kDa subunit family. [2Fe-2S] cluster is required as a cofactor. Requires [4Fe-4S] cluster as cofactor.

It catalyses the reaction a quinone + NADH + 5 H(+)(in) = a quinol + NAD(+) + 4 H(+)(out). In terms of biological role, NDH-1 shuttles electrons from NADH, via FMN and iron-sulfur (Fe-S) centers, to quinones in the respiratory chain. Couples the redox reaction to proton translocation (for every two electrons transferred, four hydrogen ions are translocated across the cytoplasmic membrane), and thus conserves the redox energy in a proton gradient. The chain is NADH-quinone oxidoreductase subunit G (nuoG) from Streptomyces coelicolor (strain ATCC BAA-471 / A3(2) / M145).